A 162-amino-acid polypeptide reads, in one-letter code: Probable chemoreceptor glutamine deamidase CheD (162 aa).

Belongs to the CheD family.

It carries out the reaction L-glutaminyl-[protein] + H2O = L-glutamyl-[protein] + NH4(+). Its function is as follows. Probably deamidates glutamine residues to glutamate on methyl-accepting chemotaxis receptors (MCPs), playing an important role in chemotaxis. The chain is Probable chemoreceptor glutamine deamidase CheD from Clostridium kluyveri (strain ATCC 8527 / DSM 555 / NBRC 12016 / NCIMB 10680 / K1).